The chain runs to 282 residues: Pantothenate synthetase (282 aa).

Position 30–37 (30–37 (MGFLHDGH)) interacts with ATP. The Proton donor role is filled by histidine 37. (R)-pantoate is bound at residue glutamine 60. Position 60 (glutamine 60) interacts with beta-alanine. 146–149 (GQKD) lines the ATP pocket. Glutamine 152 contributes to the (R)-pantoate binding site. ATP contacts are provided by residues isoleucine 175 and 183–186 (KSSR).

Belongs to the pantothenate synthetase family. Homodimer.

Its subcellular location is the cytoplasm. The enzyme catalyses (R)-pantoate + beta-alanine + ATP = (R)-pantothenate + AMP + diphosphate + H(+). It participates in cofactor biosynthesis; (R)-pantothenate biosynthesis; (R)-pantothenate from (R)-pantoate and beta-alanine: step 1/1. In terms of biological role, catalyzes the condensation of pantoate with beta-alanine in an ATP-dependent reaction via a pantoyl-adenylate intermediate. The polypeptide is Pantothenate synthetase (Campylobacter jejuni subsp. doylei (strain ATCC BAA-1458 / RM4099 / 269.97)).